Consider the following 597-residue polypeptide: Electron transfer flavoprotein-ubiquinone oxidoreductase, mitochondrial (597 aa).

53-67 (VVIVGGGPSGLSAAI) serves as a coordination point for FAD. Residues 91-112 (IGGHTLSGAVIETRALDELIPN) lie within the membrane without spanning it. A ubiquinone-binding residues include G285 and G286. An intramembrane segment occupies 409-426 (IDPATYDKNIRDTYVVKE). Positions 540, 566, 569, and 572 each coordinate [4Fe-4S] cluster. In terms of domain architecture, 4Fe-4S ferredoxin-type spans 557-586 (KRLQINAQNCIHCKTCDIKDPQQNINWVTP).

Belongs to the ETF-QO/FixC family. As to quaternary structure, monomer. [4Fe-4S] cluster serves as cofactor. It depends on FAD as a cofactor.

It localises to the mitochondrion inner membrane. The catalysed reaction is a ubiquinone + reduced [electron-transfer flavoprotein] = a ubiquinol + oxidized [electron-transfer flavoprotein] + H(+). Functionally, accepts electrons from ETF and reduces ubiquinone. The sequence is that of Electron transfer flavoprotein-ubiquinone oxidoreductase, mitochondrial (let-721) from Caenorhabditis elegans.